A 142-amino-acid polypeptide reads, in one-letter code: Hemoglobin subunit alpha-2 (142 aa).

The 141-residue stretch at 2–142 folds into the Globin domain; the sequence is VLSAADKTNV…VSTVLTSKYR (141 aa). His-59 serves as a coordination point for O2. His-88 provides a ligand contact to heme b.

It belongs to the globin family. Heterotetramer of two alpha chains and two beta chains. As to expression, red blood cells.

Involved in oxygen transport from the lung to the various peripheral tissues. In terms of biological role, hemopressin acts as an antagonist peptide of the cannabinoid receptor CNR1. Hemopressin-binding efficiently blocks cannabinoid receptor CNR1 and subsequent signaling. In Equus quagga burchellii (Burchell's zebra), this protein is Hemoglobin subunit alpha-2 (HBA2).